Consider the following 670-residue polypeptide: Protein angel homolog 1 (670 aa).

Phosphoserine occurs at positions 77 and 105.

Belongs to the CCR4/nocturin family.

The chain is Protein angel homolog 1 (ANGEL1) from Homo sapiens (Human).